Consider the following 364-residue polypeptide: 3'(2'),5'-bisphosphate nucleotidase 1 (364 aa).

The Proton acceptor role is filled by Asp-54. Residues Glu-77, Asp-141, Ile-143, and Asp-144 each coordinate Mg(2+). Thr-146 serves as the catalytic Proton acceptor. Positions 146, 243, 272, 275, 289, and 302 each coordinate adenosine 3',5'-bisphosphate. AMP-binding residues include His-243, Ser-272, Lys-275, Arg-289, and Asp-302. A Mg(2+)-binding site is contributed by Asp-302.

It belongs to the inositol monophosphatase superfamily. Requires Mg(2+) as cofactor.

It carries out the reaction 3'-phosphoadenylyl sulfate + H2O = adenosine 5'-phosphosulfate + phosphate. The enzyme catalyses adenosine 3',5'-bisphosphate + H2O = AMP + phosphate. It catalyses the reaction adenosine 2',5'-bisphosphate + H2O = AMP + phosphate. In terms of biological role, phosphatase that converts adenosine 3'-phosphate 5'-phosphosulfate (PAPS) to adenosine 5'-phosphosulfate (APS) and 3'(2')-phosphoadenosine 5'-phosphate (PAP) to AMP. Regulates the flux of sulfur in the sulfur-activation pathway by converting PAPS to APS. Involved in salt tolerance. The chain is 3'(2'),5'-bisphosphate nucleotidase 1 (HAL21) from Candida albicans (strain WO-1) (Yeast).